A 393-amino-acid polypeptide reads, in one-letter code: Ribonucleoside-diphosphate reductase subunit M2 (393 aa).

Ser18 carries the phosphoserine modification. Fe cation contacts are provided by Asp142, Glu173, and His176. Tyr180 is a catalytic residue. Fe cation is bound by residues Glu236, Glu270, and His273.

This sequence belongs to the ribonucleoside diphosphate reductase small chain family. As to quaternary structure, heterodimer of a large and a small subunit. It depends on Fe cation as a cofactor.

It localises to the cytoplasm. It catalyses the reaction a 2'-deoxyribonucleoside 5'-diphosphate + [thioredoxin]-disulfide + H2O = a ribonucleoside 5'-diphosphate + [thioredoxin]-dithiol. In terms of biological role, provides the precursors necessary for DNA synthesis. Catalyzes the biosynthesis of deoxyribonucleotides from the corresponding ribonucleotides. The polypeptide is Ribonucleoside-diphosphate reductase subunit M2 (RnrS) (Drosophila melanogaster (Fruit fly)).